The following is a 91-amino-acid chain: Lipolysis-activating peptide 1-alpha chain (91 aa).

A signal peptide spans M1 to G22. Residues S24–K87 enclose the LCN-type CS-alpha/beta domain. Cystine bridges form between C38–C61, C47–C66, and C51–C68.

The protein belongs to the long (3 C-C) scorpion toxin superfamily. Monomer (edited version) and heterodimer (non-edited version) of this alpha chain and a beta chain (AC P84809). In terms of tissue distribution, expressed by the venom gland.

It is found in the secreted. Its function is as follows. The heterodimer non-edited LVP1 induces lipolysis in rat adipocytes. Induction of lipolysis by LVP1 appears to be mediated through the beta-2 adrenergic receptor pathway (ADRB2). Intracerebroventricular injection is not toxic to mice. In terms of biological role, the edited BmKBTx-like, similar to beta-toxins, may modulate voltage-gated sodium channels (Nav) and may block voltage-gated potassium channels (Kv). The polypeptide is Lipolysis-activating peptide 1-alpha chain (Buthus occitanus tunetanus (Common European scorpion)).